We begin with the raw amino-acid sequence, 70 residues long: Translation initiation factor IF-1 (70 aa).

The region spanning Met1–Lys70 is the S1-like domain.

The protein belongs to the IF-1 family. As to quaternary structure, component of the 30S ribosomal translation pre-initiation complex which assembles on the 30S ribosome in the order IF-2 and IF-3, IF-1 and N-formylmethionyl-tRNA(fMet); mRNA recruitment can occur at any time during PIC assembly.

It is found in the cytoplasm. Its function is as follows. One of the essential components for the initiation of protein synthesis. Stabilizes the binding of IF-2 and IF-3 on the 30S subunit to which N-formylmethionyl-tRNA(fMet) subsequently binds. Helps modulate mRNA selection, yielding the 30S pre-initiation complex (PIC). Upon addition of the 50S ribosomal subunit IF-1, IF-2 and IF-3 are released leaving the mature 70S translation initiation complex. The protein is Translation initiation factor IF-1 of Mycoplasma genitalium (strain ATCC 33530 / DSM 19775 / NCTC 10195 / G37) (Mycoplasmoides genitalium).